We begin with the raw amino-acid sequence, 291 residues long: Lipoyl synthase (291 aa).

[4Fe-4S] cluster-binding residues include C35, C40, C46, C61, C65, C68, and S273. In terms of domain architecture, Radical SAM core spans 47–262 (FGKRQATFLI…KERALTMGFE (216 aa)).

The protein belongs to the radical SAM superfamily. Lipoyl synthase family. Requires [4Fe-4S] cluster as cofactor.

It is found in the cytoplasm. The enzyme catalyses [[Fe-S] cluster scaffold protein carrying a second [4Fe-4S](2+) cluster] + N(6)-octanoyl-L-lysyl-[protein] + 2 oxidized [2Fe-2S]-[ferredoxin] + 2 S-adenosyl-L-methionine + 4 H(+) = [[Fe-S] cluster scaffold protein] + N(6)-[(R)-dihydrolipoyl]-L-lysyl-[protein] + 4 Fe(3+) + 2 hydrogen sulfide + 2 5'-deoxyadenosine + 2 L-methionine + 2 reduced [2Fe-2S]-[ferredoxin]. It participates in protein modification; protein lipoylation via endogenous pathway; protein N(6)-(lipoyl)lysine from octanoyl-[acyl-carrier-protein]: step 2/2. Catalyzes the radical-mediated insertion of two sulfur atoms into the C-6 and C-8 positions of the octanoyl moiety bound to the lipoyl domains of lipoate-dependent enzymes, thereby converting the octanoylated domains into lipoylated derivatives. The polypeptide is Lipoyl synthase (Citrifermentans bemidjiense (strain ATCC BAA-1014 / DSM 16622 / JCM 12645 / Bem) (Geobacter bemidjiensis)).